Here is a 526-residue protein sequence, read N- to C-terminus: Phosphoenolpyruvate carboxykinase (ATP) 2 (526 aa).

Substrate-binding residues include arginine 55, tyrosine 190, and lysine 196. ATP-binding positions include lysine 196, histidine 215, and 231–239; that span reads GLSGTGKTT. Residues lysine 196 and histidine 215 each contribute to the Mn(2+) site. Aspartate 252 is a binding site for Mn(2+). ATP is bound by residues glutamate 280, arginine 317, and threonine 442. Arginine 317 lines the substrate pocket.

The protein belongs to the phosphoenolpyruvate carboxykinase (ATP) family. The cofactor is Mn(2+).

It is found in the cytoplasm. The catalysed reaction is oxaloacetate + ATP = phosphoenolpyruvate + ADP + CO2. It functions in the pathway carbohydrate biosynthesis; gluconeogenesis. In terms of biological role, involved in the gluconeogenesis. Catalyzes the conversion of oxaloacetate (OAA) to phosphoenolpyruvate (PEP) through direct phosphoryl transfer between the nucleoside triphosphate and OAA. The chain is Phosphoenolpyruvate carboxykinase (ATP) 2 from Moorella thermoacetica (strain ATCC 39073 / JCM 9320).